The chain runs to 361 residues: Outer membrane protein P2 (361 aa).

Residues 1–20 (MKKTLAALIVGAFAASAANA) form the signal peptide.

This sequence belongs to the Gram-negative porin family. As to quaternary structure, homotrimer.

It is found in the cell outer membrane. Forms pores that allow passive diffusion of small molecules across the outer membrane. In Haemophilus influenzae, this protein is Outer membrane protein P2 (ompP2).